The chain runs to 111 residues: Small ribosomal subunit protein mS38 (111 aa).

A compositionally biased stretch (basic residues) spans 82–99 (RKRKKKMKKHKLRKRRKR). Positions 82-111 (RKRKKKMKKHKLRKRRKREKAERRKLSQGR) are disordered. A compositionally biased stretch (basic and acidic residues) spans 100-111 (EKAERRKLSQGR).

This sequence belongs to the mitochondrion-specific ribosomal protein mS38 family. In terms of assembly, component of the mitochondrial small ribosomal subunit (mt-SSU). Mature yeast 74S mitochondrial ribosomes consist of a small (37S) and a large (54S) subunit. The 37S small subunit contains a 15S ribosomal RNA (15S mt-rRNA) and 34 different proteins. The 54S large subunit contains a 21S rRNA (21S mt-rRNA) and 46 different proteins.

It localises to the mitochondrion. The protein resides in the mitochondrion inner membrane. Functionally, component of the mitochondrial ribosome (mitoribosome), a dedicated translation machinery responsible for the synthesis of mitochondrial genome-encoded proteins, including at least some of the essential transmembrane subunits of the mitochondrial respiratory chain. The mitoribosomes are attached to the mitochondrial inner membrane and translation products are cotranslationally integrated into the membrane. mS38 is also involved in the splicing of the COX1 mRNA. The sequence is that of Small ribosomal subunit protein mS38 (QRI5) from Saccharomyces cerevisiae (strain ATCC 204508 / S288c) (Baker's yeast).